We begin with the raw amino-acid sequence, 129 residues long: Small ribosomal subunit protein uS11 (129 aa).

Residues 108–129 form a disordered region; it reads EDVTPIPHDGTKPKGGKRGRRV.

This sequence belongs to the universal ribosomal protein uS11 family. Part of the 30S ribosomal subunit.

In terms of biological role, located on the platform of the 30S subunit. The polypeptide is Small ribosomal subunit protein uS11 (Methanothrix thermoacetophila (strain DSM 6194 / JCM 14653 / NBRC 101360 / PT) (Methanosaeta thermophila)).